The chain runs to 73 residues: Toxin Td9 (73 aa).

The N-terminal stretch at 1-7 (IGMVAEC) is a signal peptide. The LCN-type CS-alpha/beta domain maps to 8–70 (KDGYLVGDDG…IWNSATNSCG (63 aa)). 4 disulfide bridges follow: Cys-18–Cys-69, Cys-22–Cys-44, Cys-30–Cys-50, and Cys-34–Cys-52. At Lys-71 the chain carries Lysine amide.

Belongs to the long (4 C-C) scorpion toxin superfamily. Sodium channel inhibitor family. Beta subfamily. Expressed by the venom gland.

The protein localises to the secreted. Functionally, beta toxins bind voltage-independently at site-4 of sodium channels (Nav) and shift the voltage of activation toward more negative potentials thereby affecting sodium channel activation and promoting spontaneous and repetitive firing. The sequence is that of Toxin Td9 from Tityus discrepans (Venezuelan scorpion).